Reading from the N-terminus, the 198-residue chain is Probable GTP-binding protein EngB (198 aa).

One can recognise an EngB-type G domain in the interval 36-198 (SEPQFAFIGR…NLSKLQELLE (163 aa)). Residues 44–51 (GRSNVGKS), 70–74 (GRTQL), 88–91 (DLPG), 155–158 (NKID), and 182–184 (ISA) contribute to the GTP site. The Mg(2+) site is built by Ser-51 and Thr-72.

The protein belongs to the TRAFAC class TrmE-Era-EngA-EngB-Septin-like GTPase superfamily. EngB GTPase family. Mg(2+) is required as a cofactor.

Functionally, necessary for normal cell division and for the maintenance of normal septation. This Mesomycoplasma hyopneumoniae (strain 232) (Mycoplasma hyopneumoniae) protein is Probable GTP-binding protein EngB.